Here is a 220-residue protein sequence, read N- to C-terminus: Probable transaldolase (220 aa).

Lys87 serves as the catalytic Schiff-base intermediate with substrate.

The protein belongs to the transaldolase family. Type 3B subfamily.

The protein localises to the cytoplasm. It carries out the reaction D-sedoheptulose 7-phosphate + D-glyceraldehyde 3-phosphate = D-erythrose 4-phosphate + beta-D-fructose 6-phosphate. The protein operates within carbohydrate degradation; pentose phosphate pathway; D-glyceraldehyde 3-phosphate and beta-D-fructose 6-phosphate from D-ribose 5-phosphate and D-xylulose 5-phosphate (non-oxidative stage): step 2/3. Its function is as follows. Transaldolase is important for the balance of metabolites in the pentose-phosphate pathway. This is Probable transaldolase from Porphyromonas gingivalis (strain ATCC 33277 / DSM 20709 / CIP 103683 / JCM 12257 / NCTC 11834 / 2561).